We begin with the raw amino-acid sequence, 152 residues long: Superoxide dismutase [Cu-Zn] (152 aa).

Residues His-45, His-47, and His-62 each coordinate Cu cation. Residues Cys-56 and Cys-145 are joined by a disulfide bond. 4 residues coordinate Zn(2+): His-62, His-70, His-79, and Asp-82. His-119 is a Cu cation binding site.

Belongs to the Cu-Zn superoxide dismutase family. In terms of assembly, homodimer. Requires Cu cation as cofactor. Zn(2+) is required as a cofactor.

The protein localises to the cytoplasm. It carries out the reaction 2 superoxide + 2 H(+) = H2O2 + O2. Its function is as follows. Destroys radicals which are normally produced within the cells and which are toxic to biological systems. This is Superoxide dismutase [Cu-Zn] (SODCC) from Capsicum annuum (Capsicum pepper).